The sequence spans 608 residues: MNKEEMNARQKKIRNFSIIAHIDHGKSTLADRILEQTGALTHREMKNQLLDSMDLERERGITIKLNAVQLKYKAKDGETYIFHLIDTPGHVDFTYEVSRSLAACEGAILVVDAAQGIEAQTLANVYLALDNDLEILPVINKIDLPAADPERVRAEIEDVIGLDASDTVLASAKSGIGIEDILEQIVEKVPEPSGDVDKPLKALIFDSVFDAYRGVIANIRIMDGVVKAGDRIKMMSNGKEFEVTEVGVFSPKATPRDELLVGDVGYLTAAIKNVGDTRVGDTITLANNPAEEALDGYRKLNPMVYCGLYPIDSSKYNDLRDALEKLELNDSALQFEAETSQALGFGFRCGFLGLLHMEIIQERIEREFNIDLITTAPSVIYHVNLTDGSNIVVDNPADMPEPGVIESVEEPYVKATVMVPNDYVGAVMELAQNKRGNFITMEYLDDIRVSIVYEIPLSEIVYDFFDQLKSSTKGYASFDYELIGYKASKLVKMDILLNAEKVDALSFIVHRDFAYERGKIIVEKLKELIPRQQFEVPIQAAIATKIVSRSTIKALRKNVLAKCYGGDVSRKRKLLEKQKEGKKRMKQIGSVEVPQEAFMAILKMDESK.

In terms of domain architecture, tr-type G spans 11–193; that stretch reads KKIRNFSIIA…QIVEKVPEPS (183 aa). GTP-binding positions include 23–28 and 140–143; these read DHGKST and NKID.

It belongs to the TRAFAC class translation factor GTPase superfamily. Classic translation factor GTPase family. LepA subfamily.

Its subcellular location is the cell membrane. The enzyme catalyses GTP + H2O = GDP + phosphate + H(+). Required for accurate and efficient protein synthesis under certain stress conditions. May act as a fidelity factor of the translation reaction, by catalyzing a one-codon backward translocation of tRNAs on improperly translocated ribosomes. Back-translocation proceeds from a post-translocation (POST) complex to a pre-translocation (PRE) complex, thus giving elongation factor G a second chance to translocate the tRNAs correctly. Binds to ribosomes in a GTP-dependent manner. The sequence is that of Elongation factor 4 from Listeria innocua serovar 6a (strain ATCC BAA-680 / CLIP 11262).